Reading from the N-terminus, the 187-residue chain is Putative AgrB-like protein 1 (187 aa).

The next 5 membrane-spanning stretches (helical) occupy residues 29-49, 50-70, 81-98, 103-120, and 149-169; these read VVIV…IAGI, LGYF…KPFI, CFIA…LVTF, LFSI…IYNK, and ILFL…TITW.

Belongs to the AgrB family.

It localises to the cell membrane. Functionally, may be involved in the proteolytic processing of a quorum sensing system signal molecule precursor. The polypeptide is Putative AgrB-like protein 1 (Clostridium perfringens (strain 13 / Type A)).